The sequence spans 491 residues: Glucose-6-phosphate 1-dehydrogenase (491 aa).

Residues arginine 49, 91-92 (DV), and lysine 146 each bind NADP(+). 4 residues coordinate substrate: histidine 176, lysine 180, glutamate 214, and aspartate 233. The Proton acceptor role is filled by histidine 238. Residues lysine 338 and lysine 343 each contribute to the substrate site.

It belongs to the glucose-6-phosphate dehydrogenase family.

It catalyses the reaction D-glucose 6-phosphate + NADP(+) = 6-phospho-D-glucono-1,5-lactone + NADPH + H(+). The protein operates within carbohydrate degradation; pentose phosphate pathway; D-ribulose 5-phosphate from D-glucose 6-phosphate (oxidative stage): step 1/3. Functionally, catalyzes the oxidation of glucose 6-phosphate to 6-phosphogluconolactone. This chain is Glucose-6-phosphate 1-dehydrogenase, found in Buchnera aphidicola subsp. Acyrthosiphon pisum (strain APS) (Acyrthosiphon pisum symbiotic bacterium).